Here is a 624-residue protein sequence, read N- to C-terminus: 1-deoxy-D-xylulose-5-phosphate synthase (624 aa).

Thiamine diphosphate is bound by residues histidine 74 and 115–117; that span reads GHS. Aspartate 146 lines the Mg(2+) pocket. Thiamine diphosphate-binding positions include 147 to 148, asparagine 175, tyrosine 286, and glutamate 366; that span reads GA. Asparagine 175 contacts Mg(2+).

It belongs to the transketolase family. DXPS subfamily. As to quaternary structure, homodimer. It depends on Mg(2+) as a cofactor. Thiamine diphosphate is required as a cofactor.

The catalysed reaction is D-glyceraldehyde 3-phosphate + pyruvate + H(+) = 1-deoxy-D-xylulose 5-phosphate + CO2. The protein operates within metabolic intermediate biosynthesis; 1-deoxy-D-xylulose 5-phosphate biosynthesis; 1-deoxy-D-xylulose 5-phosphate from D-glyceraldehyde 3-phosphate and pyruvate: step 1/1. Its function is as follows. Catalyzes the acyloin condensation reaction between C atoms 2 and 3 of pyruvate and glyceraldehyde 3-phosphate to yield 1-deoxy-D-xylulose-5-phosphate (DXP). The sequence is that of 1-deoxy-D-xylulose-5-phosphate synthase from Clostridium kluyveri (strain NBRC 12016).